Reading from the N-terminus, the 198-residue chain is Prolactin (198 aa).

3 disulfides stabilise this stretch: cysteine 4/cysteine 11, cysteine 58/cysteine 173, and cysteine 190/cysteine 198.

Belongs to the somatotropin/prolactin family. As to expression, pituitary gland.

The protein localises to the secreted. The sequence is that of Prolactin from Chelonia mydas (Green sea-turtle).